Consider the following 757-residue polypeptide: Catalase-peroxidase (757 aa).

The segment at residues 101–248 (WHSAGTYRIG…LAAVQMGLIY (148 aa)) is a cross-link (tryptophyl-tyrosyl-methioninium (Trp-Tyr) (with M-274)). The active-site Proton acceptor is His-102. A disordered region spans residues 213-232 (VHHPDEHRGAKEKASKNSDS). The segment at residues 248–274 (YVNPEGPDGCPDPLASARDIRETFARM) is a cross-link (tryptophyl-tyrosyl-methioninium (Tyr-Met) (with W-101)). His-289 lines the heme b pocket.

This sequence belongs to the peroxidase family. Peroxidase/catalase subfamily. Homodimer or homotetramer. The cofactor is heme b. In terms of processing, formation of the three residue Trp-Tyr-Met cross-link is important for the catalase, but not the peroxidase activity of the enzyme.

It carries out the reaction H2O2 + AH2 = A + 2 H2O. It catalyses the reaction 2 H2O2 = O2 + 2 H2O. Its function is as follows. Bifunctional enzyme with both catalase and broad-spectrum peroxidase activity. In Xylella fastidiosa (strain M23), this protein is Catalase-peroxidase.